The sequence spans 299 residues: METQYPKLIEPSKTRIGWIGIGIMGSAMVSHILAAGYSVTVYARDLRKTKDLQTKGGRTANSPKELGEMSDVVFTIVGNSNDVRSLLLGDDGVLSGLKPGGVTVDMTSSKPGLAREIYAEARRRDCWAVDAPVSGGDAGAREGKLTIFAGGDSEIVEWLAPVMKTMGIVRFMGGAGSGQSCKIGNQICVGSNMIGLAEGIVFAEKAGLDPVKWLEAVKDGAAGSAVMRLFGEMMAVRDYKATGFAEYMVKDLGMAAEAAMAMPGTALNKQLFTVMVANGDGKLGFQGVVDVIRRLNGLS.

NAD(+) is bound by residues 14–43 (TRIG…TVYA) and serine 108. Residue lysine 182 is part of the active site. NAD(+) is bound at residue lysine 250.

It belongs to the HIBADH-related family. 3-hydroxyisobutyrate dehydrogenase subfamily.

The protein localises to the mitochondrion. It carries out the reaction 3-hydroxy-2-methylpropanoate + NAD(+) = 2-methyl-3-oxopropanoate + NADH + H(+). It participates in amino-acid degradation; L-valine degradation. This Arabidopsis thaliana (Mouse-ear cress) protein is Probable 3-hydroxyisobutyrate dehydrogenase-like 2, mitochondrial.